The following is a 194-amino-acid chain: Large ribosomal subunit protein bL9 (194 aa).

The span at 156–167 (RGEDISSRREDQ) shows a compositional bias: basic and acidic residues. The tract at residues 156–194 (RGEDISSRREDQDAAAEAIAAAGEFFDPDAQQDEEPEQQ) is disordered. The span at 181-194 (FDPDAQQDEEPEQQ) shows a compositional bias: acidic residues.

This sequence belongs to the bacterial ribosomal protein bL9 family.

In terms of biological role, binds to the 23S rRNA. The protein is Large ribosomal subunit protein bL9 of Rhodopseudomonas palustris (strain BisB5).